Consider the following 256-residue polypeptide: MKIITCYKCVPDEQDIAINNADGTLDFSKADSKISQYDLNAIEAACQLKQQLGDAQVVAMSVGGKALTNAKGRKDVLSRGPDELIVVIDDQFEQALPQHTATALAAAAQKSGFDLLICGDGSSDLYAQQVGLLVGEALNIPAINGVSKILSLTDSTLTVERELEDEVETLSIPLPAVIAVSTDINTPQIPSMKAILGAAKKPVQVWSPADIGLNSVSAYSTQQVAAPKQRERQRVVIEGDGEEQIAAFVENLRKII.

It belongs to the ETF beta-subunit/FixA family. In terms of assembly, heterodimer of FixA and FixB.

It functions in the pathway amine and polyamine metabolism; carnitine metabolism. Required for anaerobic carnitine reduction. May bring reductant to CaiA. This chain is Protein FixA, found in Salmonella dublin (strain CT_02021853).